Consider the following 455-residue polypeptide: Probable cytosolic iron-sulfur protein assembly protein 1 (455 aa).

WD repeat units follow at residues 31 to 70 (GHSS…TTSA), 90 to 129 (GHQR…DGSS), 163 to 202 (GHES…EFEC), 208 to 247 (EHSQ…DWFC), 253 to 292 (GHES…QCEA), 318 to 365 (YHDR…DEKS), and 380 to 453 (HASA…YAAT).

The protein belongs to the WD repeat CIA1 family.

Essential component of the cytosolic iron-sulfur (Fe/S) protein assembly machinery. Required for the maturation of extramitochondrial Fe/S proteins. The polypeptide is Probable cytosolic iron-sulfur protein assembly protein 1 (Mycosarcoma maydis (Corn smut fungus)).